We begin with the raw amino-acid sequence, 511 residues long: N-acetylgalactosamine-6-O-sulfatase (511 aa).

Position 83 is a 3-oxoalanine (Ser) (S83).

It belongs to the sulfatase family. Post-translationally, the conversion to 3-oxoalanine (also known as C-formylglycine, FGly), of a serine or cysteine residue in prokaryotes and of a cysteine residue in eukaryotes, is critical for catalytic activity.

Functionally, exosulfatase involved in the degradation of the glycosaminoglycans (GAGs) chondroitin sulfate (CS) and dermatan sulfate (DS). Catalyzes the hydrolysis of the 6-sulfate groups of the N-acetyl-D-galactosamine 6-sulfate units. GAG-specific sulfatases play a key role in the persistence of the major human gut symbiont B.thetaiotaomicron in the host gastrointestinal tract. The protein is N-acetylgalactosamine-6-O-sulfatase of Bacteroides thetaiotaomicron (strain ATCC 29148 / DSM 2079 / JCM 5827 / CCUG 10774 / NCTC 10582 / VPI-5482 / E50).